A 230-amino-acid chain; its full sequence is Phosphatidylserine decarboxylase proenzyme (230 aa).

Ser186 serves as the catalytic Schiff-base intermediate with substrate; via pyruvic acid. At Ser186 the chain carries Pyruvic acid (Ser); by autocatalysis.

The protein belongs to the phosphatidylserine decarboxylase family. PSD-A subfamily. Heterodimer of a large membrane-associated beta subunit and a small pyruvoyl-containing alpha subunit. Pyruvate serves as cofactor. Is synthesized initially as an inactive proenzyme. Formation of the active enzyme involves a self-maturation process in which the active site pyruvoyl group is generated from an internal serine residue via an autocatalytic post-translational modification. Two non-identical subunits are generated from the proenzyme in this reaction, and the pyruvate is formed at the N-terminus of the alpha chain, which is derived from the carboxyl end of the proenzyme. The post-translation cleavage follows an unusual pathway, termed non-hydrolytic serinolysis, in which the side chain hydroxyl group of the serine supplies its oxygen atom to form the C-terminus of the beta chain, while the remainder of the serine residue undergoes an oxidative deamination to produce ammonia and the pyruvoyl prosthetic group on the alpha chain.

Its subcellular location is the cell membrane. It catalyses the reaction a 1,2-diacyl-sn-glycero-3-phospho-L-serine + H(+) = a 1,2-diacyl-sn-glycero-3-phosphoethanolamine + CO2. Its pathway is phospholipid metabolism; phosphatidylethanolamine biosynthesis; phosphatidylethanolamine from CDP-diacylglycerol: step 2/2. Functionally, catalyzes the formation of phosphatidylethanolamine (PtdEtn) from phosphatidylserine (PtdSer). This chain is Phosphatidylserine decarboxylase proenzyme, found in Wolbachia sp. subsp. Brugia malayi (strain TRS).